The following is a 713-amino-acid chain: Elongation factor G (713 aa).

A tr-type G domain is found at 8–290 (ERYRNFGIMA…GVIQLLPSPV (283 aa)). Residues 17–24 (AHIDAGKT), 88–92 (DTPGH), and 142–145 (NKMD) contribute to the GTP site.

This sequence belongs to the TRAFAC class translation factor GTPase superfamily. Classic translation factor GTPase family. EF-G/EF-2 subfamily.

The protein localises to the cytoplasm. In terms of biological role, catalyzes the GTP-dependent ribosomal translocation step during translation elongation. During this step, the ribosome changes from the pre-translocational (PRE) to the post-translocational (POST) state as the newly formed A-site-bound peptidyl-tRNA and P-site-bound deacylated tRNA move to the P and E sites, respectively. Catalyzes the coordinated movement of the two tRNA molecules, the mRNA and conformational changes in the ribosome. The chain is Elongation factor G from Stenotrophomonas maltophilia (strain K279a).